A 135-amino-acid polypeptide reads, in one-letter code: ATP synthase epsilon chain (135 aa).

Basic and acidic residues predominate over residues 90 to 103; that stretch reads DVRRAESAKERAES. The segment at 90–115 is disordered; sequence DVRRAESAKERAESHLNNNDEDTDIN.

Belongs to the ATPase epsilon chain family. F-type ATPases have 2 components, CF(1) - the catalytic core - and CF(0) - the membrane proton channel. CF(1) has five subunits: alpha(3), beta(3), gamma(1), delta(1), epsilon(1). CF(0) has three main subunits: a, b and c.

The protein localises to the cell membrane. Functionally, produces ATP from ADP in the presence of a proton gradient across the membrane. The chain is ATP synthase epsilon chain from Staphylococcus carnosus (strain TM300).